Here is a 122-residue protein sequence, read N- to C-terminus: Large ribosomal subunit protein uL14c (122 aa).

Belongs to the universal ribosomal protein uL14 family. In terms of assembly, part of the 50S ribosomal subunit.

It localises to the plastid. The protein localises to the chloroplast. Its function is as follows. Binds to 23S rRNA. The protein is Large ribosomal subunit protein uL14c of Manihot esculenta (Cassava).